The chain runs to 358 residues: Peptide chain release factor 1 (358 aa).

Gln233 is subject to N5-methylglutamine. The segment at 286-309 is disordered; it reads AELASARKSQVGTGDRSERIRTYN.

This sequence belongs to the prokaryotic/mitochondrial release factor family. In terms of processing, methylated by PrmC. Methylation increases the termination efficiency of RF1.

The protein resides in the cytoplasm. Its function is as follows. Peptide chain release factor 1 directs the termination of translation in response to the peptide chain termination codons UAG and UAA. The polypeptide is Peptide chain release factor 1 (Carboxydothermus hydrogenoformans (strain ATCC BAA-161 / DSM 6008 / Z-2901)).